Here is a 276-residue protein sequence, read N- to C-terminus: Large ribosomal subunit protein uL2 (276 aa).

Disordered stretches follow at residues 37 to 59 and 225 to 276; these read QFQK…GGHK and VMNP…RHKR. Positions 39–49 are enriched in polar residues; sequence QKSGRNNNGHI. Residues 50 to 59 show a composition bias toward basic residues; sequence TTRHKGGGHK.

Belongs to the universal ribosomal protein uL2 family. In terms of assembly, part of the 50S ribosomal subunit. Forms a bridge to the 30S subunit in the 70S ribosome.

In terms of biological role, one of the primary rRNA binding proteins. Required for association of the 30S and 50S subunits to form the 70S ribosome, for tRNA binding and peptide bond formation. It has been suggested to have peptidyltransferase activity; this is somewhat controversial. Makes several contacts with the 16S rRNA in the 70S ribosome. The polypeptide is Large ribosomal subunit protein uL2 (Cupriavidus pinatubonensis (strain JMP 134 / LMG 1197) (Cupriavidus necator (strain JMP 134))).